Reading from the N-terminus, the 356-residue chain is Transcription elongation factor, mitochondrial (356 aa).

Residues 1-35 constitute a mitochondrion transit peptide; the sequence is MTVPSLLLAGGRWRCFPLPLASSLFQALHNSCCRK.

It belongs to the TEFM family. In terms of assembly, interacts with POLRMT.

The protein localises to the mitochondrion matrix. The protein resides in the mitochondrion nucleoid. Its function is as follows. Transcription elongation factor which increases mitochondrial RNA polymerase processivity. Regulates transcription of the mitochondrial genome, including genes important for the oxidative phosphorylation machinery. This is Transcription elongation factor, mitochondrial (TEFM) from Bos taurus (Bovine).